The chain runs to 525 residues: GMP synthase [glutamine-hydrolyzing] (525 aa).

Residues 9-207 (RILILDFGSQ…VQDICGCEAL (199 aa)) form the Glutamine amidotransferase type-1 domain. Catalysis depends on C86, which acts as the Nucleophile. Active-site residues include H181 and E183. Residues 208-400 (WTASNIVEDA…LGLPYDMVYR (193 aa)) form the GMPS ATP-PPase domain. An ATP-binding site is contributed by 235 to 241 (SGGVDSS).

In terms of assembly, homodimer.

The enzyme catalyses XMP + L-glutamine + ATP + H2O = GMP + L-glutamate + AMP + diphosphate + 2 H(+). It functions in the pathway purine metabolism; GMP biosynthesis; GMP from XMP (L-Gln route): step 1/1. In terms of biological role, catalyzes the synthesis of GMP from XMP. The chain is GMP synthase [glutamine-hydrolyzing] from Pseudomonas entomophila (strain L48).